Consider the following 337-residue polypeptide: Glyceraldehyde-3-phosphate dehydrogenase 1 (337 aa).

Residues 12 to 13 (RI), D34, and M79 contribute to the NAD(+) site. D-glyceraldehyde 3-phosphate-binding positions include 151 to 153 (SCT), T182, 211 to 212 (TG), and R234. C152 functions as the Nucleophile in the catalytic mechanism. Residue N316 coordinates NAD(+).

The protein belongs to the glyceraldehyde-3-phosphate dehydrogenase family. In terms of assembly, homotetramer.

It is found in the cytoplasm. It carries out the reaction D-glyceraldehyde 3-phosphate + phosphate + NAD(+) = (2R)-3-phospho-glyceroyl phosphate + NADH + H(+). Its pathway is carbohydrate degradation; glycolysis; pyruvate from D-glyceraldehyde 3-phosphate: step 1/5. This is Glyceraldehyde-3-phosphate dehydrogenase 1 (GAP1) from Giardia intestinalis (Giardia lamblia).